The following is a 184-amino-acid chain: Probable RNA 2'-phosphotransferase (184 aa).

It belongs to the KptA/TPT1 family.

Its function is as follows. Removes the 2'-phosphate from RNA via an intermediate in which the phosphate is ADP-ribosylated by NAD followed by a presumed transesterification to release the RNA and generate ADP-ribose 1''-2''-cyclic phosphate (APPR&gt;P). May function as an ADP-ribosylase. This is Probable RNA 2'-phosphotransferase from Shigella boydii serotype 18 (strain CDC 3083-94 / BS512).